Reading from the N-terminus, the 896-residue chain is MVVPEFRSPQCRALCTKLLLTLWVFSFVGEACKKVTFHVPSTLEADKIIGRVSLKECLSSADGIMPSDPDFRVLDDGSVYPTRAVVLSDEKRSFTIQLSDSKMQTQKEIPVILEHKKKVLKKRHTKETVLRRSKRRWAPIPCSMQENSLGPFPLFLQQVQSDAAQNYTVFYSISGRGADQEPLNWFFIERDTGNLYCTRPVDREEYDVFDLIAYASTADGYSADLPLPLPIKIEDENDNYPLFTEAIYAFEVPEGSRLGTVVGTVCATDKDEPDTMHTRLKYSILEQTPPSPGLFSVHPDTGVITTVSHYMDREVVDKYKLIMKVQDMNGQFFGLISTSTCIITVQDSNDNAPTFRQNTYETAVEENTYNVEILRIPVDDKDMINTANWKANFTILKGNENGWFKITTDPVTNEGVLCVVKPLDYEENRQVTLEIGVNNEAPFIKDVANRIPTMNRAMVTVHVKDQNEGPECKPPEQYVRIKENSAVGSKINGYKAYDPETKNSNGLRYKKLQDPKDWVSIEEVSGLLTISKTLDREIMAPRNDMYNITVMAIDQEGKSCTGTLAVNIEDVNDNAPEIIQDYIVICKPKMGYTDISAVDPDEPIHGPPFQFNLANTSPEVNRIWTLNQVNDTAARLSYQKTADVQIYNVPVTVKDRAGQSATKILRVNLCDCTHPSQCPLRSRSAGITLGKWAILAILLGIALLFSVLLTLVCGVVTARKGKHFPEDLAQQNLIISNTEAPGDDRVCSANGFTTHTANNSSQGFCGTMGSGMRNGGQETIEMMKGHQTLDSCRVAGHHHTLDSGRGGHMDTDNCRYTYSEWHSFTQPRLGEKLHVCNQNEDHIPSQDYVLTYNYEGRGSPAGSVGCCSEKQEEEGLDFLNNLEPKFLTLAETCTKR.

Residues 1 to 31 (MVVPEFRSPQCRALCTKLLLTLWVFSFVGEA) form the signal peptide. Positions 32–135 (CKKVTFHVPS…KETVLRRSKR (104 aa)) are excised as a propeptide. 5 Cadherin domains span residues 136 to 243 (RWAP…YPLF), 244 to 355 (TEAI…APTF), 356 to 472 (RQNT…GPEC), 473 to 580 (KPPE…EIIQ), and 581 to 691 (DYIV…TLGK). At 136-695 (RWAPIPCSMQ…GITLGKWAIL (560 aa)) the chain is on the extracellular side. The N-linked (GlcNAc...) asparagine glycan is linked to N166. N-linked (GlcNAc...) asparagine glycans are attached at residues N392 and N547. N630 carries N-linked (GlcNAc...) (high mannose) asparagine glycosylation. The chain crosses the membrane as a helical span at residues 696–716 (AILLGIALLFSVLLTLVCGVV). Residues 717 to 896 (TARKGKHFPE…LTLAETCTKR (180 aa)) are Cytoplasmic-facing.

As to quaternary structure, may form homodimers. Interacts with DSG1; there is evidence to suggest that the interaction promotes cell-cell adhesion of keratinocytes. Expressed in the basal layers of epidermal stratified epithelia from birth (at protein level).

The protein localises to the cell membrane. Its subcellular location is the cell junction. The protein resides in the desmosome. It is found in the cytoplasm. Its function is as follows. A component of desmosome cell-cell junctions which are required for positive regulation of cellular adhesion. Required for cell-cell adhesion in the epidermis, as a result required for the maintenance of the dermal cohesion and the dermal barrier function. Required for cell-cell adhesion of epithelial cell layers surrounding the telogen hair club, as a result plays an important role in telogen hair shaft anchorage. Essential for successful completion of embryo compaction and development beyond the 8-cell stage. In Mus musculus (Mouse), this protein is Desmocollin-3 (Dsc3).